The chain runs to 283 residues: MPDPAKPGKDLTAWKKKKQPVHRTVSQICPPPRRPLTVVDIRTGMENERLGVVRDSMFQNPLIVKAELGKPRERSCSLPGINFNYGLYIRGLDGGVPEAIGHWNVFKQQPTCPHELTRNYIAMNRGAVKAGLVTARENMLYRELNDIRINDQEDRRQKEPPPIPPNMTFGIRSRPSTPFFDLLQHRYQQLWVQEQKATQQAIKMEKKQKVILGKLYETRSSQLRKYKPPVKLDALWHMPHFKKVASHLATFPTEADRQRALKAHKEEYAVRQGTLRMGNYTHP.

A disordered region spans residues 151–170 (DQEDRRQKEPPPIPPNMTFG).

It belongs to the CFAP77 family. In terms of assembly, microtubule inner protein component of sperm flagellar doublet microtubules.

The protein resides in the cytoplasm. It is found in the cytoskeleton. It localises to the cilium axoneme. Its subcellular location is the flagellum axoneme. In terms of biological role, microtubule inner protein (MIP) part of the dynein-decorated doublet microtubules (DMTs) in cilia axoneme, which is required for motile cilia beating. The sequence is that of Cilia- and flagella-associated protein 77 from Mus musculus (Mouse).